The primary structure comprises 271 residues: Transmembrane protein 33 homolog (271 aa).

The interval 1–32 (MVEIVEEPDDHQSSSTGAGSSGSSSAPPPPPP) is disordered. The span at 13–25 (SSSTGAGSSGSSS) shows a compositional bias: low complexity. Transmembrane regions (helical) follow at residues 56–76 (VLTV…VPAH), 125–145 (VVFL…IYAA), and 180–200 (ALGI…SLIF).

The protein belongs to the PER33/POM33 family.

It is found in the membrane. This Caenorhabditis elegans protein is Transmembrane protein 33 homolog.